The primary structure comprises 337 residues: Eukaryotic translation initiation factor 3 subunit H (337 aa).

Residues 21–153 (VQCDGLAVMK…LKAYRLTPQA (133 aa)) form the MPN domain.

Belongs to the eIF-3 subunit H family. In terms of assembly, component of the eukaryotic translation initiation factor 3 (eIF-3) complex. The eIF-3 complex interacts with pix. Interacts with mxt.

The protein resides in the cytoplasm. In terms of biological role, component of the eukaryotic translation initiation factor 3 (eIF-3) complex, which is involved in protein synthesis of a specialized repertoire of mRNAs and, together with other initiation factors, stimulates binding of mRNA and methionyl-tRNAi to the 40S ribosome. The eIF-3 complex specifically targets and initiates translation of a subset of mRNAs involved in cell proliferation. The polypeptide is Eukaryotic translation initiation factor 3 subunit H (Drosophila ananassae (Fruit fly)).